Reading from the N-terminus, the 296-residue chain is Probable endonuclease 4 (296 aa).

Positions 68, 109, 144, 178, 181, 213, 226, 228, and 258 each coordinate Zn(2+).

Belongs to the AP endonuclease 2 family. Requires Zn(2+) as cofactor.

The enzyme catalyses Endonucleolytic cleavage to 5'-phosphooligonucleotide end-products.. Endonuclease IV plays a role in DNA repair. It cleaves phosphodiester bonds at apurinic or apyrimidinic (AP) sites, generating a 3'-hydroxyl group and a 5'-terminal sugar phosphate. The chain is Probable endonuclease 4 from Staphylococcus aureus (strain MRSA252).